A 659-amino-acid chain; its full sequence is Cysteine-rich receptor-like protein kinase 7 (659 aa).

Positions 1–23 (MSSLFPFIFLFLFSFLTSFRASA) are cleaved as a signal peptide. Over 24–273 (QDPRFLAYYC…SLSDKSGNSN (250 aa)) the chain is Extracellular. Gnk2-homologous domains follow at residues 27-131 (RFLA…HKNI) and 142-244 (FILR…LYDF). N35, N42, N60, N69, and N103 each carry an N-linked (GlcNAc...) asparagine glycan. N246 carries an N-linked (GlcNAc...) asparagine glycan. The helical transmembrane segment at 274-294 (VVVVAVVVPIIVAVLIFIAGY) threads the bilayer. Over 295–659 (CFFAKRAKKT…DKSMSDLDPR (365 aa)) the chain is Cytoplasmic. Positions 336-622 (FSENNKIGRG…ALPAPQQPGF (287 aa)) constitute a Protein kinase domain. Residues 342–350 (IGRGGFGDV) and K364 contribute to the ATP site. The residue at position 409 (Y409) is a Phosphotyrosine. The active-site Proton acceptor is the D461. Position 465 is a phosphoserine (S465). T501 bears the Phosphothreonine mark. Y509 carries the phosphotyrosine modification. The segment at 626–659 (SRPGTNRLDSDQSTTNKSVTVSIDDKSMSDLDPR) is disordered. Positions 636 to 646 (DQSTTNKSVTV) are enriched in polar residues. Over residues 648-659 (IDDKSMSDLDPR) the composition is skewed to basic and acidic residues.

This sequence belongs to the protein kinase superfamily. Ser/Thr protein kinase family. CRK subfamily.

It localises to the membrane. The enzyme catalyses L-seryl-[protein] + ATP = O-phospho-L-seryl-[protein] + ADP + H(+). It carries out the reaction L-threonyl-[protein] + ATP = O-phospho-L-threonyl-[protein] + ADP + H(+). This Arabidopsis thaliana (Mouse-ear cress) protein is Cysteine-rich receptor-like protein kinase 7 (CRK7).